Reading from the N-terminus, the 205-residue chain is Small ribosomal subunit protein uS4 (205 aa).

Positions 19–45 are disordered; it reads IWGRPKSPVNRREYGPGQHGQRRKGKL. An S4 RNA-binding domain is found at 94 to 157; it reads SRLDAVVYRA…KQLVIVLEAV (64 aa).

Belongs to the universal ribosomal protein uS4 family. As to quaternary structure, part of the 30S ribosomal subunit. Contacts protein S5. The interaction surface between S4 and S5 is involved in control of translational fidelity.

One of the primary rRNA binding proteins, it binds directly to 16S rRNA where it nucleates assembly of the body of the 30S subunit. Functionally, with S5 and S12 plays an important role in translational accuracy. This chain is Small ribosomal subunit protein uS4, found in Brucella anthropi (strain ATCC 49188 / DSM 6882 / CCUG 24695 / JCM 21032 / LMG 3331 / NBRC 15819 / NCTC 12168 / Alc 37) (Ochrobactrum anthropi).